The following is a 388-amino-acid chain: Chorismate synthase (388 aa).

2 residues coordinate NADP(+): R39 and R45. FMN is bound by residues 130 to 132 (RSS), 251 to 252 (NA), G296, 311 to 315 (KPIPT), and R337.

It belongs to the chorismate synthase family. In terms of assembly, homotetramer. The cofactor is FMNH2.

The enzyme catalyses 5-O-(1-carboxyvinyl)-3-phosphoshikimate = chorismate + phosphate. The protein operates within metabolic intermediate biosynthesis; chorismate biosynthesis; chorismate from D-erythrose 4-phosphate and phosphoenolpyruvate: step 7/7. In terms of biological role, catalyzes the anti-1,4-elimination of the C-3 phosphate and the C-6 proR hydrogen from 5-enolpyruvylshikimate-3-phosphate (EPSP) to yield chorismate, which is the branch point compound that serves as the starting substrate for the three terminal pathways of aromatic amino acid biosynthesis. This reaction introduces a second double bond into the aromatic ring system. The protein is Chorismate synthase of Streptococcus pyogenes serotype M12 (strain MGAS2096).